The sequence spans 162 residues: NADH-quinone oxidoreductase subunit I (162 aa).

4Fe-4S ferredoxin-type domains follow at residues 52-82 and 93-122; these read LRRY…IEAG and TRYD…EGPN. Positions 62, 65, 68, 72, 102, 105, 108, and 112 each coordinate [4Fe-4S] cluster.

The protein belongs to the complex I 23 kDa subunit family. NDH-1 is composed of 14 different subunits. Subunits NuoA, H, J, K, L, M, N constitute the membrane sector of the complex. [4Fe-4S] cluster is required as a cofactor.

Its subcellular location is the cell inner membrane. The catalysed reaction is a quinone + NADH + 5 H(+)(in) = a quinol + NAD(+) + 4 H(+)(out). Its function is as follows. NDH-1 shuttles electrons from NADH, via FMN and iron-sulfur (Fe-S) centers, to quinones in the respiratory chain. The immediate electron acceptor for the enzyme in this species is believed to be ubiquinone. Couples the redox reaction to proton translocation (for every two electrons transferred, four hydrogen ions are translocated across the cytoplasmic membrane), and thus conserves the redox energy in a proton gradient. In Methylorubrum extorquens (strain PA1) (Methylobacterium extorquens), this protein is NADH-quinone oxidoreductase subunit I.